Consider the following 76-residue polypeptide: Sec-independent protein translocase protein TatA (76 aa).

A helical membrane pass occupies residues 1–21; that stretch reads MGGISIWQLLIIVAIIVLLFG. Positions 43–76 are disordered; the sequence is MADDKSQPQDASFEKVEAKEAASTEQKAKEKEQA.

This sequence belongs to the TatA/E family. The Tat system comprises two distinct complexes: a TatABC complex, containing multiple copies of TatA, TatB and TatC subunits, and a separate TatA complex, containing only TatA subunits. Substrates initially bind to the TatABC complex, which probably triggers association of the separate TatA complex to form the active translocon.

It is found in the cell inner membrane. In terms of biological role, part of the twin-arginine translocation (Tat) system that transports large folded proteins containing a characteristic twin-arginine motif in their signal peptide across membranes. TatA could form the protein-conducting channel of the Tat system. This Actinobacillus pleuropneumoniae serotype 5b (strain L20) protein is Sec-independent protein translocase protein TatA.